Here is a 272-residue protein sequence, read N- to C-terminus: MHLLLVQLLVLLPLGKADLCVDGCQSQGSLSFPLLERGRRDLHVANHEEAEDKPDLFVAVPHLMGTSLAGEGQRQRGKMLSRLGRFWKKPETEFYPPRDVESDHVSSGMQAVTQPADGRKVERSPLQEEAKRFWHRFMFRKGPAFQGVILPIKSHEVHWETCRTVPFNQTIAHEDCQKVVVQNNLCFGKCSSIRFPGEGADAHSFCSHCSPTKFTTVHLMLNCTSPTPVVKMVMQVEECQCMVKTERGEERLLLAGSQGSFIPGLPASKTNP.

A signal peptide spans 1–17 (MHLLLVQLLVLLPLGKA). 4 disulfides stabilise this stretch: Cys162–Cys209, Cys176–Cys223, Cys186–Cys239, and Cys190–Cys241. Positions 162 to 246 (CRTVPFNQTI…EECQCMVKTE (85 aa)) constitute a CTCK domain. 2 N-linked (GlcNAc...) asparagine glycosylation sites follow: Asn168 and Asn222.

The protein belongs to the DAN family. As to quaternary structure, forms monomers and predominantly dimers. N-glycosylated.

The protein localises to the secreted. Its function is as follows. Cytokine that may play a role in anterior neural induction and somite formation during embryogenesis in part, through a BMP-inhibitory mechanism. Can regulate Nodal signaling during gastrulation as well as the formation and patterning of the primitive streak. The polypeptide is Cerberus (Cer1) (Mus musculus (Mouse)).